Here is a 338-residue protein sequence, read N- to C-terminus: Penicillin V acylase (338 aa).

The propeptide at 1–3 is removed in mature form; the sequence is MLG. The active-site Nucleophile is the Cys-4.

The protein belongs to the peptidase C59 family. Homotetramer. In terms of processing, expressed as an inactive precursor that is cleaved autocatalytically at Gly-3/Cys-4 to generate an active enzyme. Processing exposes a catalytic N-terminal nucleophile residue with a free alpha amino group.

It catalyses the reaction a penicillin + H2O = 6-aminopenicillanate + a carboxylate. Hydrolase activity is rapidly inhibited by lysine modifying reagents. Catalyzes the hydrolysis of penicillin V to 6-aminopenicillanate (6-APA). Exhibits high specificity for penicillin V. Penicillin G and other related compounds are hydrolyzed at less than 10% of the rate of penicillin V. Among the cephalosporins, cephalosporin C is resistant to cleavage, whereas cephalosporin G is cleaved at about 1% of the rate of cleavage of penicillin V. The chain is Penicillin V acylase from Lysinibacillus sphaericus (Bacillus sphaericus).